The following is a 471-amino-acid chain: Ribulose bisphosphate carboxylase large chain (471 aa).

The residue at position 5 (lysine 5) is an N6,N6,N6-trimethyllysine. The substrate site is built by asparagine 114 and threonine 164. The active-site Proton acceptor is lysine 166. A substrate-binding site is contributed by lysine 168. The Mg(2+) site is built by lysine 192, aspartate 194, and glutamate 195. Lysine 192 is modified (N6-carboxylysine). Histidine 285 acts as the Proton acceptor in catalysis. Substrate contacts are provided by arginine 286, histidine 318, and serine 370.

This sequence belongs to the RuBisCO large chain family. Type I subfamily. In terms of assembly, heterohexadecamer of 8 large chains and 8 small chains; disulfide-linked. The disulfide link is formed within the large subunit homodimers. Requires Mg(2+) as cofactor. Post-translationally, the disulfide bond which can form in the large chain dimeric partners within the hexadecamer appears to be associated with oxidative stress and protein turnover.

Its subcellular location is the plastid. The protein localises to the chloroplast. It catalyses the reaction 2 (2R)-3-phosphoglycerate + 2 H(+) = D-ribulose 1,5-bisphosphate + CO2 + H2O. The catalysed reaction is D-ribulose 1,5-bisphosphate + O2 = 2-phosphoglycolate + (2R)-3-phosphoglycerate + 2 H(+). Functionally, ruBisCO catalyzes two reactions: the carboxylation of D-ribulose 1,5-bisphosphate, the primary event in carbon dioxide fixation, as well as the oxidative fragmentation of the pentose substrate in the photorespiration process. Both reactions occur simultaneously and in competition at the same active site. This chain is Ribulose bisphosphate carboxylase large chain, found in Chiococca alba (West Indian milkberry).